A 132-amino-acid polypeptide reads, in one-letter code: Neurophysin 2 (132 aa).

7 disulfides stabilise this stretch: Cys-10-Cys-54, Cys-13-Cys-27, Cys-21-Cys-44, Cys-28-Cys-34, Cys-61-Cys-73, Cys-67-Cys-85, and Cys-74-Cys-79.

This sequence belongs to the vasopressin/oxytocin family.

The protein resides in the secreted. Neurophysin 2 specifically binds vasopressin. The chain is Neurophysin 2 from Struthio camelus (Common ostrich).